Here is a 435-residue protein sequence, read N- to C-terminus: Ornithine decarboxylase (435 aa).

The residue at position 98 (K98) is an N6-(pyridoxal phosphate)lysine. Pyridoxal 5'-phosphate contacts are provided by residues S230, G268, and 301–304 (EPGR). Residue 344–345 (YD) participates in substrate binding. The Proton donor; shared with dimeric partner role is filled by C380. Residue D381 participates in substrate binding. Position 409 (Y409) interacts with pyridoxal 5'-phosphate.

Belongs to the Orn/Lys/Arg decarboxylase class-II family. As to quaternary structure, homodimer. Only the dimer is catalytically active, as the active sites are constructed of residues from both monomers. The cofactor is pyridoxal 5'-phosphate.

It catalyses the reaction L-ornithine + H(+) = putrescine + CO2. Its pathway is amine and polyamine biosynthesis; putrescine biosynthesis via L-ornithine pathway; putrescine from L-ornithine: step 1/1. With respect to regulation, inhibited by antizyme (AZ) in response to polyamine levels. AZ inhibits the assembly of the functional homodimer by binding to ODC monomers and targeting them for ubiquitin-independent proteolytic destruction by the 26S proteasome. Its function is as follows. Catalyzes the first and rate-limiting step of polyamine biosynthesis that converts ornithine into putrescine, which is the precursor for the polyamines, spermidine and spermine. Polyamines are essential for cell proliferation and are implicated in cellular processes, ranging from DNA replication to apoptosis. The polypeptide is Ornithine decarboxylase (ODC) (Capsicum annuum (Capsicum pepper)).